We begin with the raw amino-acid sequence, 2149 residues long: Polyketide synthase 1 (2149 aa).

Positions 19 to 261 (FIFGDQSSCN…TRLAVHAPYH (243 aa)) are N-terminal acylcarrier protein transacylase domain (SAT). In terms of domain architecture, Ketosynthase family 3 (KS3) spans 394-829 (ESKIAIIGMS…GGNTALLVED (436 aa)). Active-site for beta-ketoacyl synthase activity residues include Cys566, His701, and His745. The interval 929–1233 (AFVFSGQGSQ…PSLMRNKDGW (305 aa)) is malonyl-CoA:ACP transacylase (MAT) domain. Ser1018 serves as the catalytic For acyl/malonyl transferase activity. A product template (PT) domain region spans residues 1310–1624 (TASVHRIVHE…RKVLNTAMPP (315 aa)). Residues 1314-1447 (HRIVHESVDK…SSLHFERPKV (134 aa)) are N-terminal hotdog fold. The PKS/mFAS DH domain occupies 1314–1619 (HRIVHESVDK…FQGIPRKVLN (306 aa)). His1346 serves as the catalytic Proton acceptor; for dehydratase activity. The C-terminal hotdog fold stretch occupies residues 1474 to 1619 (LNSRMSSGVI…FQGIPRKVLN (146 aa)). The active-site Proton donor; for dehydratase activity is Asp1533. The segment at 1619 to 1657 (NTAMPPPKSQNEAPVRSAPAKPAAKPPKSASSEHSGHFA) is disordered. The span at 1635-1650 (SAPAKPAAKPPKSASS) shows a compositional bias: low complexity. The 75-residue stretch at 1678 to 1752 (RNPMLAVFKI…DLATHLGLDT (75 aa)) folds into the Carrier 1 domain. Ser1712 bears the O-(pantetheine 4'-phosphoryl)serine mark. Positions 1755–1790 (SDQSSGQSSSSGGLSPRSDSIGEITSSATTPPSLSP) are enriched in low complexity. The tract at residues 1755 to 1796 (SDQSSGQSSSSGGLSPRSDSIGEITSSATTPPSLSPRGSVSG) is disordered. A Carrier 2 domain is found at 1793 to 1870 (SVSGSQCKDV…SFKHMFQQGH (78 aa)). The residue at position 1830 (Ser1830) is an O-(pantetheine 4'-phosphoryl)serine. Residues 1882–2147 (LKQYRATSTL…ERVAAFIRST (266 aa)) form a thioesterase (TE) domain region. The active-site For thioesterase activity is Ser1973.

Functionally, polyketide synthase; part of the Pks1 gene cluster that mediates the biosynthesis of an anthraquinone derivative pigment that contributes to conidial pigmentation that provides protection from UV radiation, heat and cold stress. The polyketide synthase Pks1 produces 1-acetyl-2,4,6,8-tetrahydroxy-9,10-anthraquinone though condensation of acetyl-CoA with malonyl-CoA. The dehydratase EthD and the laccase Mlac1 further convert the anthraquinone derivative into the final conidial pigment. The chain is Polyketide synthase 1 from Metarhizium majus (strain ARSEF 297).